A 229-amino-acid chain; its full sequence is MSLLEQLDKNIAASGGLIVSCQPVPGSPLDKPEIVAAMALAAEQAGAVAVRIEGIDNLRVARSLVSVPIIGIIKRDLDESPVRITPFLDDVDALAQAGANIIAIDGTARQRPVTVEALLARIHHHHLLAMADCSSVDDGLACQRLGADIIGTTMSGYTTPDTPEEPDLPLVKALHDAGCRVIAEGRYNSPELAAKAIRYGAWAVTVGSAITRLEYICGWYNDALKKAAS.

Belongs to the NanE family.

The enzyme catalyses an N-acyl-D-glucosamine 6-phosphate = an N-acyl-D-mannosamine 6-phosphate. Its pathway is amino-sugar metabolism; N-acetylneuraminate degradation; D-fructose 6-phosphate from N-acetylneuraminate: step 3/5. In terms of biological role, converts N-acetylmannosamine-6-phosphate (ManNAc-6-P) to N-acetylglucosamine-6-phosphate (GlcNAc-6-P). In Salmonella arizonae (strain ATCC BAA-731 / CDC346-86 / RSK2980), this protein is Putative N-acetylmannosamine-6-phosphate 2-epimerase.